Reading from the N-terminus, the 367-residue chain is Polygalacturonase (367 aa).

The N-terminal stretch at M1–A18 is a signal peptide. A disulfide bridge connects residues C34 and C49. PbH1 repeat units follow at residues A161 to S191, S192 to S213, G214 to S234, V243 to T264, and V272 to Q294. Residue D206 is the Proton donor of the active site. C208 and C224 form a disulfide bridge. The active site involves H228. N-linked (GlcNAc...) asparagine glycans are attached at residues N318 and N336. 2 disulfides stabilise this stretch: C334-C339 and C358-C367.

The protein belongs to the glycosyl hydrolase 28 family.

Its subcellular location is the secreted. The enzyme catalyses (1,4-alpha-D-galacturonosyl)n+m + H2O = (1,4-alpha-D-galacturonosyl)n + (1,4-alpha-D-galacturonosyl)m.. The sequence is that of Polygalacturonase (PG1) from Penicillium digitatum (Green mold).